The primary structure comprises 122 residues: Large ribosomal subunit protein uL14 (122 aa).

The protein belongs to the universal ribosomal protein uL14 family. In terms of assembly, part of the 50S ribosomal subunit. Forms a cluster with proteins L3 and L19. In the 70S ribosome, L14 and L19 interact and together make contacts with the 16S rRNA in bridges B5 and B8.

In terms of biological role, binds to 23S rRNA. Forms part of two intersubunit bridges in the 70S ribosome. The polypeptide is Large ribosomal subunit protein uL14 (Xylella fastidiosa (strain M23)).